The following is a 450-amino-acid chain: UDP-N-acetylmuramoylalanine--D-glutamate ligase (450 aa).

119 to 125 (GSNGKTT) lines the ATP pocket.

This sequence belongs to the MurCDEF family.

Its subcellular location is the cytoplasm. It carries out the reaction UDP-N-acetyl-alpha-D-muramoyl-L-alanine + D-glutamate + ATP = UDP-N-acetyl-alpha-D-muramoyl-L-alanyl-D-glutamate + ADP + phosphate + H(+). The protein operates within cell wall biogenesis; peptidoglycan biosynthesis. In terms of biological role, cell wall formation. Catalyzes the addition of glutamate to the nucleotide precursor UDP-N-acetylmuramoyl-L-alanine (UMA). This Streptococcus thermophilus (strain CNRZ 1066) protein is UDP-N-acetylmuramoylalanine--D-glutamate ligase.